We begin with the raw amino-acid sequence, 564 residues long: E3 ubiquitin-protein ligase RNF168 (564 aa).

The segment at 16 to 55 (CGICMEILVEPVTLPCNHTLCNPCFQSTVEKANLCCPFCR) adopts an RING-type zinc-finger fold. A Phosphoserine modification is found at serine 70. The short motif at 110 to 128 (LSKPGELRREYEEEISKVE) is the LR motif 1 element. At serine 134 the chain carries Phosphoserine. The UMI motif motif lies at 143–151 (EEYIQRLLA). 2 disordered regions span residues 149 to 179 (LLAE…EELA) and 193 to 291 (NILA…QGPE). The segment covering 157 to 179 (EKRRTERRRSEMEEQLRGDEELA) has biased composition (basic and acidic residues). The MIU motif 1 motif lies at 168–191 (MEEQLRGDEELARRLSTSINSNYE). Position 197 is a phosphoserine (serine 197). A Glycyl lysine isopeptide (Lys-Gly) (interchain with G-Cter in SUMO2) cross-link involves residue lysine 210. Positions 242-259 (KTEHGEDMCKSKETDSSD) are enriched in basic and acidic residues. Residues 275 to 288 (PTHSPQTCPETQGQ) show a composition bias toward polar residues. A phosphothreonine mark is found at threonine 348 and threonine 361. Phosphoserine occurs at positions 413 and 414. An MIU motif 2 motif is present at residues 438–461 (RHKQEEQDRLLALQLQKEADKEKM). The disordered stretch occupies residues 455-564 (EADKEKMVPN…QKSILQMFQR (110 aa)). The short motif at 465 to 476 (RQKGSPDQYQLR) is the LR motif 2 element. A compositionally biased stretch (polar residues) spans 466-480 (QKGSPDQYQLRTSSP). Phosphoserine is present on serine 469. Positions 491–515 (NVKDRNSPKQTADRSKSQRSRKGEY) are enriched in basic and acidic residues. Composition is skewed to polar residues over residues 519 to 531 (FEST…NGTK) and 555 to 564 (QKSILQMFQR). Residue lysine 524 forms a Glycyl lysine isopeptide (Lys-Gly) (interchain with G-Cter in SUMO2) linkage.

It belongs to the RNF168 family. In terms of assembly, monomer. Interacts with UBE2N/UBC13. Sumoylated with SUMO1 by PIAS4 in response to double-strand breaks (DSBs). In terms of processing, ubiquitinated.

The protein resides in the nucleus. The enzyme catalyses S-ubiquitinyl-[E2 ubiquitin-conjugating enzyme]-L-cysteine + [acceptor protein]-L-lysine = [E2 ubiquitin-conjugating enzyme]-L-cysteine + N(6)-ubiquitinyl-[acceptor protein]-L-lysine.. It functions in the pathway protein modification; protein ubiquitination. Functionally, E3 ubiquitin-protein ligase required for accumulation of repair proteins to sites of DNA damage. Acts with UBE2N/UBC13 to amplify the RNF8-dependent histone ubiquitination. Recruited to sites of DNA damage at double-strand breaks (DSBs) by binding to ubiquitinated histone H2A and H2AX and amplifies the RNF8-dependent H2A ubiquitination, promoting the formation of 'Lys-63'-linked ubiquitin conjugates. This leads to concentrate ubiquitinated histones H2A and H2AX at DNA lesions to the threshold required for recruitment of TP53BP1 and BRCA1. Also recruited at DNA interstrand cross-links (ICLs) sites and promotes accumulation of 'Lys-63'-linked ubiquitination of histones H2A and H2AX, leading to recruitment of FAAP20 and Fanconi anemia (FA) complex, followed by interstrand cross-link repair. H2A ubiquitination also mediates the ATM-dependent transcriptional silencing at regions flanking DSBs in cis, a mechanism to avoid collision between transcription and repair intermediates. Also involved in class switch recombination in immune system, via its role in regulation of DSBs repair. Following DNA damage, promotes the ubiquitination and degradation of JMJD2A/KDM4A in collaboration with RNF8, leading to unmask H4K20me2 mark and promote the recruitment of TP53BP1 at DNA damage sites. Not able to initiate 'Lys-63'-linked ubiquitination in vitro; possibly due to partial occlusion of the UBE2N/UBC13-binding region. Catalyzes monoubiquitination of 'Lys-13' and 'Lys-15' of nucleosomal histone H2A (H2AK13Ub and H2AK15Ub, respectively). This chain is E3 ubiquitin-protein ligase RNF168, found in Rattus norvegicus (Rat).